A 650-amino-acid polypeptide reads, in one-letter code: Threonine--tRNA ligase (650 aa).

One can recognise a TGS domain in the interval 1–61 (MIKITFPDGA…DEDGTLEIVM (61 aa)). Residues 242–540 (DHRKLGKELD…LIETYKGAFP (299 aa)) are catalytic. Cys336, His387, and His517 together coordinate Zn(2+).

Belongs to the class-II aminoacyl-tRNA synthetase family. In terms of assembly, homodimer. Zn(2+) is required as a cofactor.

It localises to the cytoplasm. It carries out the reaction tRNA(Thr) + L-threonine + ATP = L-threonyl-tRNA(Thr) + AMP + diphosphate + H(+). Its function is as follows. Catalyzes the attachment of threonine to tRNA(Thr) in a two-step reaction: L-threonine is first activated by ATP to form Thr-AMP and then transferred to the acceptor end of tRNA(Thr). Also edits incorrectly charged L-seryl-tRNA(Thr). The protein is Threonine--tRNA ligase of Streptococcus suis (strain 98HAH33).